The chain runs to 426 residues: Enolase (426 aa).

Gln-163 contributes to the (2R)-2-phosphoglycerate binding site. Glu-205 serves as the catalytic Proton donor. Mg(2+)-binding residues include Asp-242, Glu-283, and Asp-310. The (2R)-2-phosphoglycerate site is built by Lys-335, Arg-364, Ser-365, and Lys-386. The active-site Proton acceptor is the Lys-335.

This sequence belongs to the enolase family. It depends on Mg(2+) as a cofactor.

Its subcellular location is the cytoplasm. It localises to the secreted. The protein localises to the cell surface. The enzyme catalyses (2R)-2-phosphoglycerate = phosphoenolpyruvate + H2O. It functions in the pathway carbohydrate degradation; glycolysis; pyruvate from D-glyceraldehyde 3-phosphate: step 4/5. Its function is as follows. Catalyzes the reversible conversion of 2-phosphoglycerate (2-PG) into phosphoenolpyruvate (PEP). It is essential for the degradation of carbohydrates via glycolysis. The protein is Enolase of Beutenbergia cavernae (strain ATCC BAA-8 / DSM 12333 / CCUG 43141 / JCM 11478 / NBRC 16432 / NCIMB 13614 / HKI 0122).